The following is a 350-amino-acid chain: Holliday junction branch migration complex subunit RuvB (350 aa).

The tract at residues 4–184 (ADRIVTASSR…FGIVQRLEFY (181 aa)) is large ATPase domain (RuvB-L). ATP-binding positions include Ile-23, Arg-24, Gly-65, Lys-68, Thr-69, Thr-70, 131-133 (EDF), Arg-174, Tyr-184, and Arg-221. Thr-69 is a binding site for Mg(2+). The small ATPAse domain (RuvB-S) stretch occupies residues 185–255 (STEDLATIVR…IADLALNMLD (71 aa)). Residues 258–350 (ERGFDHQDRR…TPDLFEGDIV (93 aa)) are head domain (RuvB-H). Residues Arg-294, Arg-313, and Arg-318 each coordinate DNA.

This sequence belongs to the RuvB family. Homohexamer. Forms an RuvA(8)-RuvB(12)-Holliday junction (HJ) complex. HJ DNA is sandwiched between 2 RuvA tetramers; dsDNA enters through RuvA and exits via RuvB. An RuvB hexamer assembles on each DNA strand where it exits the tetramer. Each RuvB hexamer is contacted by two RuvA subunits (via domain III) on 2 adjacent RuvB subunits; this complex drives branch migration. In the full resolvosome a probable DNA-RuvA(4)-RuvB(12)-RuvC(2) complex forms which resolves the HJ.

Its subcellular location is the cytoplasm. It carries out the reaction ATP + H2O = ADP + phosphate + H(+). The RuvA-RuvB-RuvC complex processes Holliday junction (HJ) DNA during genetic recombination and DNA repair, while the RuvA-RuvB complex plays an important role in the rescue of blocked DNA replication forks via replication fork reversal (RFR). RuvA specifically binds to HJ cruciform DNA, conferring on it an open structure. The RuvB hexamer acts as an ATP-dependent pump, pulling dsDNA into and through the RuvAB complex. RuvB forms 2 homohexamers on either side of HJ DNA bound by 1 or 2 RuvA tetramers; 4 subunits per hexamer contact DNA at a time. Coordinated motions by a converter formed by DNA-disengaged RuvB subunits stimulates ATP hydrolysis and nucleotide exchange. Immobilization of the converter enables RuvB to convert the ATP-contained energy into a lever motion, pulling 2 nucleotides of DNA out of the RuvA tetramer per ATP hydrolyzed, thus driving DNA branch migration. The RuvB motors rotate together with the DNA substrate, which together with the progressing nucleotide cycle form the mechanistic basis for DNA recombination by continuous HJ branch migration. Branch migration allows RuvC to scan DNA until it finds its consensus sequence, where it cleaves and resolves cruciform DNA. In Stutzerimonas stutzeri (strain A1501) (Pseudomonas stutzeri), this protein is Holliday junction branch migration complex subunit RuvB.